Here is a 217-residue protein sequence, read N- to C-terminus: Probable transaldolase (217 aa).

Lys84 serves as the catalytic Schiff-base intermediate with substrate.

Belongs to the transaldolase family. Type 3B subfamily.

It is found in the cytoplasm. The enzyme catalyses D-sedoheptulose 7-phosphate + D-glyceraldehyde 3-phosphate = D-erythrose 4-phosphate + beta-D-fructose 6-phosphate. Its pathway is carbohydrate degradation; pentose phosphate pathway; D-glyceraldehyde 3-phosphate and beta-D-fructose 6-phosphate from D-ribose 5-phosphate and D-xylulose 5-phosphate (non-oxidative stage): step 2/3. Functionally, transaldolase is important for the balance of metabolites in the pentose-phosphate pathway. The protein is Probable transaldolase of Roseiflexus castenholzii (strain DSM 13941 / HLO8).